The primary structure comprises 362 residues: tRNA-specific 2-thiouridylase MnmA (362 aa).

Residues 9–16 and methionine 35 contribute to the ATP site; that span reads GMSGGVDS. The interaction with target base in tRNA stretch occupies residues 95–97; it reads NPD. Cysteine 100 serves as the catalytic Nucleophile. Cysteines 100 and 197 form a disulfide. Glycine 124 provides a ligand contact to ATP. The interval 147-149 is interaction with tRNA; the sequence is KDQ. The active-site Cysteine persulfide intermediate is the cysteine 197. Residues 309–310 form an interaction with tRNA region; sequence RY.

This sequence belongs to the MnmA/TRMU family.

The protein localises to the cytoplasm. It carries out the reaction S-sulfanyl-L-cysteinyl-[protein] + uridine(34) in tRNA + AH2 + ATP = 2-thiouridine(34) in tRNA + L-cysteinyl-[protein] + A + AMP + diphosphate + H(+). Functionally, catalyzes the 2-thiolation of uridine at the wobble position (U34) of tRNA, leading to the formation of s(2)U34. This is tRNA-specific 2-thiouridylase MnmA from Cupriavidus pinatubonensis (strain JMP 134 / LMG 1197) (Cupriavidus necator (strain JMP 134)).